The following is a 390-amino-acid chain: Succinate--CoA ligase [ADP-forming] subunit beta (390 aa).

An ATP-grasp domain is found at 9-248; the sequence is KEILRRHKAN…ITEEDPLEVQ (240 aa). ATP is bound by residues lysine 50, 57–59, glutamate 103, isoleucine 106, and glutamate 111; that span reads GRG. Asparagine 203 and aspartate 217 together coordinate Mg(2+). Residues asparagine 268 and 325–327 each bind substrate; that span reads GIV.

The protein belongs to the succinate/malate CoA ligase beta subunit family. Heterotetramer of two alpha and two beta subunits. Mg(2+) is required as a cofactor.

It carries out the reaction succinate + ATP + CoA = succinyl-CoA + ADP + phosphate. It catalyses the reaction GTP + succinate + CoA = succinyl-CoA + GDP + phosphate. It functions in the pathway carbohydrate metabolism; tricarboxylic acid cycle; succinate from succinyl-CoA (ligase route): step 1/1. Succinyl-CoA synthetase functions in the citric acid cycle (TCA), coupling the hydrolysis of succinyl-CoA to the synthesis of either ATP or GTP and thus represents the only step of substrate-level phosphorylation in the TCA. The beta subunit provides nucleotide specificity of the enzyme and binds the substrate succinate, while the binding sites for coenzyme A and phosphate are found in the alpha subunit. This is Succinate--CoA ligase [ADP-forming] subunit beta from Leptospira borgpetersenii serovar Hardjo-bovis (strain JB197).